Here is a 325-residue protein sequence, read N- to C-terminus: tRNA N6-adenosine threonylcarbamoyltransferase (325 aa).

Positions 111 and 115 each coordinate Fe cation. Substrate-binding positions include 134–138 (LVSGG), Asp-167, Gly-180, Asp-184, and Asn-284. Asp-312 is a Fe cation binding site.

It belongs to the KAE1 / TsaD family. Fe(2+) is required as a cofactor.

The protein localises to the cytoplasm. The catalysed reaction is L-threonylcarbamoyladenylate + adenosine(37) in tRNA = N(6)-L-threonylcarbamoyladenosine(37) in tRNA + AMP + H(+). Its function is as follows. Required for the formation of a threonylcarbamoyl group on adenosine at position 37 (t(6)A37) in tRNAs that read codons beginning with adenine. Is involved in the transfer of the threonylcarbamoyl moiety of threonylcarbamoyl-AMP (TC-AMP) to the N6 group of A37, together with TsaE and TsaB. TsaD likely plays a direct catalytic role in this reaction. The polypeptide is tRNA N6-adenosine threonylcarbamoyltransferase (Trichodesmium erythraeum (strain IMS101)).